Reading from the N-terminus, the 91-residue chain is Putative pterin-4-alpha-carbinolamine dehydratase (91 aa).

This sequence belongs to the pterin-4-alpha-carbinolamine dehydratase family.

The catalysed reaction is (4aS,6R)-4a-hydroxy-L-erythro-5,6,7,8-tetrahydrobiopterin = (6R)-L-erythro-6,7-dihydrobiopterin + H2O. The sequence is that of Putative pterin-4-alpha-carbinolamine dehydratase from Halobacterium salinarum (strain ATCC 29341 / DSM 671 / R1).